Reading from the N-terminus, the 917-residue chain is PAX3- and PAX7-binding protein 1 (917 aa).

The segment covering 1–11 (MFRKARRVNVR) has biased composition (basic residues). Disordered stretches follow at residues 1–123 (MFRK…FKVK), 143–205 (LEKS…GAFS), and 229–275 (RKKR…RIVF). The residue at position 16 (Ser-16) is a Phosphoserine. Residues 16-28 (SEEEERERDEEQE) are compositionally biased toward acidic residues. Gly residues-rich tracts occupy residues 40-50 (EEAGPGGGDRA) and 73-85 (AEAGGGFPGGAEP). Lys-149 is covalently cross-linked (Glycyl lysine isopeptide (Lys-Gly) (interchain with G-Cter in SUMO1); alternate). Residue Lys-149 forms a Glycyl lysine isopeptide (Lys-Gly) (interchain with G-Cter in SUMO2); alternate linkage. Phosphoserine occurs at positions 154, 155, and 158. Over residues 161 to 172 (PLDKTGHVKDTN) the composition is skewed to basic and acidic residues. Acidic residues predominate over residues 183 to 193 (GEDEMDMESEK). Ser-191 is subject to Phosphoserine. Over residues 234–256 (MARELGDFTPHDNEPGKGRLVRE) the composition is skewed to basic and acidic residues. The segment covering 257 to 268 (DENDASDDEDDD) has biased composition (acidic residues). A phosphoserine mark is found at Ser-262 and Ser-295. 2 disordered regions span residues 362–381 (SSDAKSQKTDNTVPFKTPSN) and 530–564 (AEREARRTRRRQAREQTGKMADHLEGLSSDDEETS). A necessary and sufficient for interaction with PAX7 region spans residues 378 to 558 (TPSNEMTPVT…MADHLEGLSS (181 aa)). Positions 542–554 (AREQTGKMADHLE) are enriched in basic and acidic residues. Ser-557 and Ser-558 each carry phosphoserine. Thr-563 carries the phosphothreonine modification.

It belongs to the GCF family. Interacts with PAX3 and PAX7. Interacts with WDR5; associates with a histone methyltransferase (HMT) complex composed at least of RBBP5, ASH2L, SET1, SET2 and KMT2A/MLL1, KMT2D/MLL2, KMT2C/MLL3 and KMT2B/MLL4 through direct interaction with WDR5. As to expression, ubiquitous.

The protein resides in the nucleus. In terms of biological role, adapter protein linking the transcription factors PAX3 and PAX7 to the histone methylation machinery and involved in myogenesis. Associates with a histone methyltransferase complex that specifically mediates dimethylation and trimethylation of 'Lys-4' of histone H3. Mediates the recruitment of that complex to the transcription factors PAX3 and PAX7 on chromatin to regulate the expression of genes involved in muscle progenitor cells proliferation including ID3 and CDC20. The protein is PAX3- and PAX7-binding protein 1 (PAXBP1) of Homo sapiens (Human).